The following is a 476-amino-acid chain: ATP synthase subunit beta (476 aa).

ATP is bound at residue Gly-154–Thr-161.

Belongs to the ATPase alpha/beta chains family. F-type ATPases have 2 components, CF(1) - the catalytic core - and CF(0) - the membrane proton channel. CF(1) has five subunits: alpha(3), beta(3), gamma(1), delta(1), epsilon(1). CF(0) has three main subunits: a(1), b(2) and c(9-12). The alpha and beta chains form an alternating ring which encloses part of the gamma chain. CF(1) is attached to CF(0) by a central stalk formed by the gamma and epsilon chains, while a peripheral stalk is formed by the delta and b chains.

Its subcellular location is the cell inner membrane. It catalyses the reaction ATP + H2O + 4 H(+)(in) = ADP + phosphate + 5 H(+)(out). Functionally, produces ATP from ADP in the presence of a proton gradient across the membrane. The catalytic sites are hosted primarily by the beta subunits. This chain is ATP synthase subunit beta, found in Nitrobacter hamburgensis (strain DSM 10229 / NCIMB 13809 / X14).